Consider the following 100-residue polypeptide: RxLR effector protein Avrblb2 (100 aa).

The signal sequence occupies residues 1 to 22 (MRSFLYGVLAFAVLARSSAVAA). Residues 43-57 (RSLRIEAQEVIQSGR) carry the RxLR-dEER motif. Positions 78–82 (RPDIK) match the Calmodulin-binding motif motif.

The protein belongs to the RxLR effector family. Interacts with the host papain-like cysteine protease C14. Interacts with the host calmodulin.

It localises to the secreted. The protein resides in the host cell membrane. Secreted effector that acts as an elicitor of hypersensitive response (HR) specifically on plants carrying defense protein Rpi-blb2. Enhances P.infestans colonization of Nicotiana benthamiana leaves. Interacts with, and subsequently prevents secretion into the apoplast of the host papain-like cysteine protease C14, thus promoting virulence by interfering with the execution of host defenses. Associates with calmodulin at the host plasma membrane to interfere with plant defense-associated calcium signaling in hosts. The polypeptide is RxLR effector protein Avrblb2 (Phytophthora infestans (strain T30-4) (Potato late blight agent)).